The chain runs to 161 residues: Nucleotide-binding protein PputGB1_4497 (161 aa).

The protein belongs to the YajQ family.

Functionally, nucleotide-binding protein. The protein is Nucleotide-binding protein PputGB1_4497 of Pseudomonas putida (strain GB-1).